The primary structure comprises 306 residues: Cytochrome P450 monooxygenase aclO (306 aa).

Cys237 is a heme binding site.

It belongs to the cytochrome P450 family. The cofactor is heme.

It functions in the pathway mycotoxin biosynthesis. Functionally, cytochrome P450 monooxygenase; part of the gene cluster that mediates the biosynthesis of aspirochlorine (or antibiotic A30641), an unusual halogenated spiro compound with distinctive antifungal properties due to selective inhibition of protein biosynthesis, and which is also active against bacteria, viruses, and murine tumor cells. The non-ribosomal peptide synthetase (NRPS) aclP is responsible the formation of the diketopiperazine (DKP) core from the condensation of 2 phenylalanine residues. One Phe residue is tailored into chlorotyrosine by hydroxylation and chlorination, whereas the second Phe undergoes an unprecedented C-C bond cleavage to be converted into glycine. After formation of the DKP, sulfur is incorporated into the DKP by conjugation with glutathione by aclG, followed by its stepwise degradation to the thiol by aclI, aclJ and aclK, and the dithiol oxidation by aclT. In addition, oxygenases (aclB, aclC, aclL and aclO) and O-methyltransferases (aclM and aclU) act as tailoring enzymes to produce the intermediate dechloroaspirochlorine. Ultimately, chlorination of dechloroaspirochlorine by the halogenase aclH is the last step in the aspirochlorine pathway. The protein is Cytochrome P450 monooxygenase aclO of Aspergillus oryzae (strain ATCC 42149 / RIB 40) (Yellow koji mold).